Reading from the N-terminus, the 512-residue chain is Opioid growth factor receptor-like protein 1 (512 aa).

Disordered stretches follow at residues 1–72 (MGNI…ETGT), 323–469 (IWGP…TCCK), and 488–512 (SLSPGTSNSNVTELKVEGSETGPFT). 2 stretches are compositionally biased toward acidic residues: residues 28–54 (GGEEEQQEAEEEEESEGTEQREDDNEE) and 62–71 (TNEGGEEETG). Positions 328–337 (DKQKADENKA) are enriched in basic and acidic residues. Residues 347-361 (QKKHSHVEKKSRPAK) are compositionally biased toward basic residues. The span at 408-421 (TVTSENNSSKTGQT) shows a compositional bias: polar residues. Residues 449 to 468 (RSLDTEHDLKRPEADRETCC) are compositionally biased toward basic and acidic residues. Over residues 490 to 499 (SPGTSNSNVT) the composition is skewed to polar residues.

This sequence belongs to the opioid growth factor receptor family.

This is Opioid growth factor receptor-like protein 1 (ogfrl1) from Xenopus tropicalis (Western clawed frog).